The sequence spans 257 residues: Glucanase inhibitor protein 1 (257 aa).

The signal sequence occupies residues 1-28; that stretch reads MKVFPALTSALVALGTAGVEAEHVQRSL. Positions 29–256 constitute a Peptidase S1 domain; that stretch reads VMGGGTVPVG…GLEWINSVIK (228 aa). Cys-56 and Cys-72 form a disulfide bridge. N-linked (GlcNAc...) asparagine glycans are attached at residues Asn-107 and Asn-180. 2 cysteine pairs are disulfide-bonded: Cys-181-Cys-191 and Cys-201-Cys-232. A glycan (N-linked (GlcNAc...) asparagine) is linked at Asn-213.

This sequence belongs to the peptidase S1 family. As to quaternary structure, interacts with host endoglucanases EGaseA.

It is found in the secreted. In terms of biological role, secreted effector that suppresses host plant glucan elicitor-mediated defense responses. Targets host endoglucanase EGaseA and inhibits the EGaseA-mediated release of elicitor-active glucan oligosaccharides from P.sojae cell walls. The chain is Glucanase inhibitor protein 1 from Phytophthora sojae (Soybean stem and root rot agent).